We begin with the raw amino-acid sequence, 477 residues long: MSGTYDDSVGVEVSSDSFWEVGNYKRTVKRIDDGHRLCNDLMNCIHERARIEKVYAQQLTEWAKRWKQLVERGPQYGTVEKAWHNLMTEAEKVSELHLEVKNALMNEDFEKIKNWQKEAFHKQMMGGFKETKEADDGFRKAQKPWAKKLKEVEAAKKSYHAACKEEKLATSRETNSKADPAMNPEQLKKLQDKVEKSKQDSQKTKEKYEKSLKDLDGTTPQYMENMEQVFEQCQQFEDKRLSFFREVLLEVEKHLDLSNVESYASIYRELEYAIKSADAMEDLKWFRNNHGPGMSMNWPQFEDWSADLNRTLSRREKKKPTDGVTLTGISQSGEQSSIQNQHSSHLSVQSAQSTNNPFEDEEETVSINETENKKIENVGSYEKTHPAEWSDDESNNPFNPSDTNGDNNPFDEDALTTLEVRVRALYDYDGQELDELSFKAGEELTKIEDEDEQGWCKGRLEGGQVGLYPANYVESVQ.

In terms of domain architecture, F-BAR spans 11–282 (VEVSSDSFWE…AIKSADAMED (272 aa)). Positions 25 to 274 (KRTVKRIDDG…SIYRELEYAI (250 aa)) form a coiled coil. Composition is skewed to basic and acidic residues over residues 163-176 (CKEE…ETNS) and 186-216 (QLKK…KDLD). 2 disordered regions span residues 163–218 (CKEE…LDGT) and 314–412 (RREK…PFDE). Positions 328–341 (GISQSGEQSSIQNQ) are enriched in low complexity. The segment covering 342–357 (HSSHLSVQSAQSTNNP) has biased composition (polar residues). The NPF1 signature appears at 356–358 (NPF). A compositionally biased stretch (basic and acidic residues) spans 370–388 (TENKKIENVGSYEKTHPAE). Residues 395-407 (NNPFNPSDTNGDN) show a composition bias toward polar residues. The NPF2 signature appears at 396–398 (NPF). Residues 408 to 410 (NPF) carry the NPF3 motif. An SH3 domain is found at 417 to 477 (TLEVRVRALY…YPANYVESVQ (61 aa)).

The protein belongs to the PACSIN family. As to quaternary structure, interacts with adam13 through the SH3 domains. Post-translationally, phosphorylated. Ubiquitously expressed with higher expression in the ectoderm, the neuroectoderm, and dorsal mesoderm layers.

The protein resides in the cytoplasm. The protein localises to the cytoskeleton. It is found in the cytoplasmic vesicle membrane. It localises to the cell projection. Its subcellular location is the ruffle membrane. The protein resides in the early endosome. The protein localises to the recycling endosome membrane. It is found in the cell membrane. It localises to the membrane. Its subcellular location is the caveola. The protein resides in the cell junction. The protein localises to the adherens junction. Regulates the morphogenesis and endocytosis of caveolae. Lipid-binding protein that is able to promote the tubulation of the phosphatidic acid-containing membranes it preferentially binds. Plays a role in intracellular vesicle-mediated transport. Involved in the endocytosis of cell-surface receptors like the EGF receptor, contributing to its internalization in the absence of EGF stimulus. The polypeptide is Protein kinase C and casein kinase substrate in neurons protein 2 (pacsin2) (Xenopus laevis (African clawed frog)).